A 356-amino-acid polypeptide reads, in one-letter code: Protein RecA (356 aa).

Residue 67-74 (GPESSGKT) coordinates ATP.

It belongs to the RecA family.

Its subcellular location is the cytoplasm. Can catalyze the hydrolysis of ATP in the presence of single-stranded DNA, the ATP-dependent uptake of single-stranded DNA by duplex DNA, and the ATP-dependent hybridization of homologous single-stranded DNAs. It interacts with LexA causing its activation and leading to its autocatalytic cleavage. This Yersinia pestis bv. Antiqua (strain Angola) protein is Protein RecA.